We begin with the raw amino-acid sequence, 626 residues long: Chaperone protein DnaK (626 aa).

The residue at position 197 (Thr-197) is a Phosphothreonine; by autocatalysis. The span at 595–614 shows a compositional bias: low complexity; that stretch reads QNMAQQQQAQGGAQQQNQNK. The interval 595–626 is disordered; that stretch reads QNMAQQQQAQGGAQQQNQNKGGDDDVIDAEVE.

It belongs to the heat shock protein 70 family.

Acts as a chaperone. The protein is Chaperone protein DnaK of Nautilia profundicola (strain ATCC BAA-1463 / DSM 18972 / AmH).